The following is a 296-amino-acid chain: 3-methyl-2-oxobutanoate hydroxymethyltransferase (296 aa).

The tract at residues 1 to 33 (MDASDTPTHPAPHPADPAATPYGAPTTPPRPLR) is disordered. The span at 16 to 25 (DPAATPYGAP) shows a compositional bias: low complexity. Residues Asp77 and Asp116 each coordinate Mg(2+). 3-methyl-2-oxobutanoate is bound by residues 77–78 (DS), Asp116, and Lys146. Glu148 contacts Mg(2+). The Proton acceptor role is filled by Glu214.

It belongs to the PanB family. In terms of assembly, homodecamer; pentamer of dimers. It depends on Mg(2+) as a cofactor.

It localises to the cytoplasm. The catalysed reaction is 3-methyl-2-oxobutanoate + (6R)-5,10-methylene-5,6,7,8-tetrahydrofolate + H2O = 2-dehydropantoate + (6S)-5,6,7,8-tetrahydrofolate. It participates in cofactor biosynthesis; (R)-pantothenate biosynthesis; (R)-pantoate from 3-methyl-2-oxobutanoate: step 1/2. Catalyzes the reversible reaction in which hydroxymethyl group from 5,10-methylenetetrahydrofolate is transferred onto alpha-ketoisovalerate to form ketopantoate. The sequence is that of 3-methyl-2-oxobutanoate hydroxymethyltransferase from Frankia casuarinae (strain DSM 45818 / CECT 9043 / HFP020203 / CcI3).